A 75-amino-acid chain; its full sequence is MAPEVLPKPRMRGLLARRLRNHMAVAFVLSLGVAALYKFRVADQRKKAYADFYRNYDVMKDFEEMRKAGIFQSVK.

Over 1-13 the chain is Mitochondrial matrix; that stretch reads MAPEVLPKPRMRG. A helical transmembrane segment spans residues 14–54; that stretch reads LLARRLRNHMAVAFVLSLGVAALYKFRVADQRKKAYADFYR. At 55 to 75 the chain is on the mitochondrial intermembrane side; it reads NYDVMKDFEEMRKAGIFQSVK.

The protein belongs to the cytochrome c oxidase subunit 6c family. In terms of assembly, component of the cytochrome c oxidase (complex IV, CIV), a multisubunit enzyme composed of 14 subunits. The complex is composed of a catalytic core of 3 subunits MT-CO1, MT-CO2 and MT-CO3, encoded in the mitochondrial DNA, and 11 supernumerary subunits COX4I1 (or COX4I2), COX5A, COX5B, COX6A1 (or COX6A2), COX6B1 (or COX6B2), COX6C, COX7A2 (or COX7A1), COX7B, COX7C, COX8A and NDUFA4, which are encoded in the nuclear genome. The complex exists as a monomer or a dimer and forms supercomplexes (SCs) in the inner mitochondrial membrane with NADH-ubiquinone oxidoreductase (complex I, CI) and ubiquinol-cytochrome c oxidoreductase (cytochrome b-c1 complex, complex III, CIII), resulting in different assemblies (supercomplex SCI(1)III(2)IV(1) and megacomplex MCI(2)III(2)IV(2)).

Its subcellular location is the mitochondrion inner membrane. Its pathway is energy metabolism; oxidative phosphorylation. Functionally, component of the cytochrome c oxidase, the last enzyme in the mitochondrial electron transport chain which drives oxidative phosphorylation. The respiratory chain contains 3 multisubunit complexes succinate dehydrogenase (complex II, CII), ubiquinol-cytochrome c oxidoreductase (cytochrome b-c1 complex, complex III, CIII) and cytochrome c oxidase (complex IV, CIV), that cooperate to transfer electrons derived from NADH and succinate to molecular oxygen, creating an electrochemical gradient over the inner membrane that drives transmembrane transport and the ATP synthase. Cytochrome c oxidase is the component of the respiratory chain that catalyzes the reduction of oxygen to water. Electrons originating from reduced cytochrome c in the intermembrane space (IMS) are transferred via the dinuclear copper A center (CU(A)) of subunit 2 and heme A of subunit 1 to the active site in subunit 1, a binuclear center (BNC) formed by heme A3 and copper B (CU(B)). The BNC reduces molecular oxygen to 2 water molecules using 4 electrons from cytochrome c in the IMS and 4 protons from the mitochondrial matrix. This Homo sapiens (Human) protein is Cytochrome c oxidase subunit 6C (COX6C).